The primary structure comprises 448 residues: Beclin-1 (448 aa).

Met-1 bears the N-acetylmethionine mark. Phosphoserine is present on residues Ser-14 and Ser-29. The segment at 47 to 66 (TTAQAKPGETQEEEANSGEE) is disordered. Ser-88, Ser-91, and Ser-94 each carry phosphoserine; by AMPK. A BH3 motif is present at residues 106-125 (TMENLSRRLKVTGDLFDIMS). Positions 110-157 (LSRRLKVTGDLFDIMSGQTDVDHPLCEECTDTLLDQLDTQLNVTENEC) are interaction with BCL2 and BCL2L1 isoform Bcl-X(L). Thr-117 carries the post-translational modification Phosphothreonine; by DAPK1. Residues 140–268 (DTLLDQLDTQ…LDKLKKTNVF (129 aa)) adopt a coiled-coil conformation. The interval 243–448 (DELKSVENQV…AWVSSQFYNK (206 aa)) is evolutionary conserved domain (ECD). Residues Lys-400 and Lys-435 each participate in a glycyl lysine isopeptide (Lys-Gly) (interchain with G-Cter in ubiquitin) cross-link. Residues 423–448 (WTKALKFMLTNLKWGLAWVSSQFYNK) are required for membrane-association.

It belongs to the beclin family. A homodimeric form is proposed to exist; this metastable form readily transits to ATG14- or UVRAG-containing complexes with BECN1:UVRAG being more stable than BECN1:ATG14. Component of the PI3K (PI3KC3/PI3K-III/class III phosphatidylinositol 3-kinase) complex whose core is composed of the catalytic subunit PIK3C3, the regulatory subunit PIK3R4 and BECN1, and associates with additional regulatory/auxiliary subunits to form alternative complex forms. Accepted alternative complex forms containing a fourth regulatory subunit in a mutually exclusive manner are PI3K complex I (PI3KC3-C1) containing ATG14, and PI3K complex II (PI3KC3-C2) containing UVRAG. PI3KC3-C1 displays a V-shaped architecture with PIK3R4 serving as a bridge between PIK3C3 and the ATG14:BECN1 subcomplex. Both, PI3KC3-C1 and PI3KC3-C2, can associate with further regulatory subunits, such as RUBCN, SH3GLB1/Bif-1 and AMBRA1. PI3KC3-C1 probably associates with PIK3CB. Forms a complex with PPP2CA and AMBRA1; AMBRA1 and BECN1 components of the complex regulate MYC stability via different pathways. Component of the complex, at least composed of LRPPRC, BECN1 and BCL2; the interactions prevent BECN1 from forming an autophagy-inducing complex with PIK3C3. Interacts with AMBRA1, GOPC, GRID2 and PIK3CB. Interacts with BCL2 and BCL2L1 isoform Bcl-X(L); the interaction inhibits BECN1 function in promoting autophagy by interfering with the formation of the PI3K complex. Interacts with cytosolic HMGB1; inhibits the interaction of BECN1 and BCL2 leading to promotion of autophagy. Interacts with USP10, USP13, VMP1, DAPK1. Interacts with the poly-Gln domain of ATXN3; the interaction causes deubiquitination at Lys-400 and stabilizes BECN1. Interacts with SLAMF1. Interacts with TRIM5; the interaction causes activation of BECN1 by causing its dissociation from its inhibitors BCL2 and TAB2. Interacts with active ULK1 (phosphorylated on 'Ser-317') and MEFV simultaneously. Interacts with TRIM50. Interacts with TRIM16. Interacts with WDR81 and WDR91; negatively regulates the PI3 kinase/PI3K activity associated with endosomal membranes. Interacts with LAPTM4B; competes with EGFR for LAPTM4B binding; regulates EGFR activity. Interacts with ATG14; this interaction is increased in the absence of TMEM39A. Interacts with WASHC1; preventing interaction with AMBRA1 and the DCX(AMBRA1) complex and subsequent ubiquitination. Interacts with TRIM17. Interacts with BCL2L10/BCL-B (via BH1 domain). Interacts with SH3BGRL. Interacts with Irgm1; enhancing BECN1-interacting partners and influencing the composition of the BECN1 complex. Interacts with ARMC3. Interacts with LRPPRC. As to quaternary structure, (Microbial infection) Interacts with murine gammaherpesvirus 68 M11; the viral protein binds BECN1 with higher affinity than cellular BCL2. Post-translationally, phosphorylation at Thr-117 by DAPK1 reduces its interaction with BCL2 and BCL2L1 and promotes induction of autophagy. In response to autophagic stimuli, phosphorylated at serine residues by AMPK in an ATG14-dependent manner, and this phosphorylation is critical for maximally efficient autophagy. In terms of processing, polyubiquitinated by NEDD4, both with 'Lys-11'- and 'Lys-63'-linkages. 'Lys-11'-linked polyubiquitination leads to degradation and is enhanced when the stabilizing interaction partner VPS34 is depleted. Deubiquitinated by USP10 and USP13, leading to stabilize the PIK3C3/VPS34-containing complexes. Polyubiquitinated at Lys-400 with 'Lys-48'-linkages. 'Lys-48'-linked poyubiquitination of Lys-400 leads to degradation. Deubiquitinated by ATXN3, leading to stabilization. Ubiquitinated at Lys-435 via 'Lys-63'-linkage by the DCX(AMBRA1) complex, thereby increasing the association between BECN1 and PIK3C3 to promote PIK3C3 activity. 'Lys-48'-linked ubiquitination by RNF216 leads to proteasomal degradation and autophagy inhibition. Proteolytically processed by caspases including CASP8 and CASP3; the C-terminal fragments lack autophagy-inducing capacity and are proposed to induce apoptosis. Thus the cleavage is proposed to be an determinant to switch from autophagy to apoptosis pathways affecting cellular homeostasis including viral infections and survival of tumor cells.

It localises to the cytoplasm. Its subcellular location is the golgi apparatus. The protein localises to the trans-Golgi network membrane. The protein resides in the endosome membrane. It is found in the endoplasmic reticulum membrane. It localises to the mitochondrion membrane. Its subcellular location is the endosome. The protein localises to the cytoplasmic vesicle. The protein resides in the autophagosome. It is found in the mitochondrion. It localises to the nucleus. In terms of biological role, plays a central role in autophagy. Acts as a core subunit of different PI3K complex forms that mediate formation of phosphatidylinositol 3-phosphate and are believed to play a role in multiple membrane trafficking pathways: PI3KC3-C1 is involved in initiation of autophagosomes and PI3KC3-C2 in maturation of autophagosomes and endocytosis. Involved in regulation of degradative endocytic trafficking and required for the abscission step in cytokinesis, probably in the context of PI3KC3-C2. Essential for the formation of PI3KC3-C2 but not PI3KC3-C1 PI3K complex forms. Involved in endocytosis including endosome formation in neuronal cells. May play a role in antiviral host defense. Beclin-1-C 35 kDa localized to mitochondria can promote apoptosis; it induces the mitochondrial translocation of BAX and the release of proapoptotic factors. The sequence is that of Beclin-1 (Becn1) from Mus musculus (Mouse).